The sequence spans 1099 residues: SLIT-ROBO Rho GTPase-activating protein 3 (1099 aa).

The F-BAR domain occupies 19–314 (AQIKEIRTQL…AVDNLDSRSD (296 aa)). Residues 352-392 (QTELLMRYHQLQSRLATLKIENEEVRKTLDATMQTLQDMLT) are a coiled coil. Positions 470-493 (GERAECGTTRPPCLPPKPQKMRRP) are disordered. The Rho-GAP domain maps to 506–694 (GSMEAFIKDS…TIIIHHEAIF (189 aa)). Positions 744 to 803 (VEQIEAIAKFDYVGRSPRELSFKKGASLLLYHRASEDWWEGRHNGVDGLIPHQYIVVQDM) constitute an SH3 domain. Positions 809-820 (DSLSQKADSEAS) are enriched in polar residues. Positions 809-846 (DSLSQKADSEASSGPLLDDKASSKNDLQSPTEHISDYG) are disordered. Phosphoserine occurs at positions 817, 820, 821, 837, and 858. Positions 861–911 (AAIPRRRSGGDTHSPPRGLGPSIDTPPRAAACPSSPHKIPLSRGRIESPEK) are disordered. Residues 952-987 (HKSLEAEALAEDIEKTMSTALHELRELERQNTVKQA) are a coiled coil. The residue at position 954 (serine 954) is a Phosphoserine. Disordered regions lie at residues 994–1014 (TLEPLKNPPGPISSEPASPLH) and 1045–1099 (ARLA…SGTM). Over residues 1060 to 1074 (VRPVVQHRSSSSSSS) the composition is skewed to low complexity. Residues 1089–1099 (PNSSSDKSGTM) are compositionally biased toward polar residues.

As to quaternary structure, homodimer. Forms a heterooligomer with SRGAP1 and SRGAP2 through its F-BAR domain. Interacts with WASF1. Probably interacts with ROBO1. Interacts with FASLG.

In terms of biological role, GTPase-activating protein for RAC1 and perhaps CDC42, but not for RhoA small GTPase. May attenuate RAC1 signaling in neurons. The sequence is that of SLIT-ROBO Rho GTPase-activating protein 3 (Srgap3) from Mus musculus (Mouse).